Reading from the N-terminus, the 505-residue chain is Putative ribose/galactose/methyl galactoside import ATP-binding protein 1 (505 aa).

ABC transporter domains are found at residues 10-245 (LRLE…VGRS) and 256-501 (RPTD…SGYG). 42-49 (GENGAGKS) serves as a coordination point for ATP.

The protein belongs to the ABC transporter superfamily. Carbohydrate importer 2 (CUT2) (TC 3.A.1.2) family.

Its subcellular location is the cell inner membrane. The catalysed reaction is D-ribose(out) + ATP + H2O = D-ribose(in) + ADP + phosphate + H(+). It catalyses the reaction D-galactose(out) + ATP + H2O = D-galactose(in) + ADP + phosphate + H(+). Its function is as follows. Part of an ABC transporter complex involved in carbohydrate import. Could be involved in ribose, galactose and/or methyl galactoside import. Responsible for energy coupling to the transport system. This chain is Putative ribose/galactose/methyl galactoside import ATP-binding protein 1, found in Agrobacterium fabrum (strain C58 / ATCC 33970) (Agrobacterium tumefaciens (strain C58)).